The sequence spans 191 residues: Peptidyl-tRNA hydrolase (191 aa).

TRNA is bound at residue tyrosine 17. Catalysis depends on histidine 22, which acts as the Proton acceptor. TRNA-binding residues include tyrosine 68, asparagine 70, and asparagine 116.

It belongs to the PTH family. In terms of assembly, monomer.

It is found in the cytoplasm. It carries out the reaction an N-acyl-L-alpha-aminoacyl-tRNA + H2O = an N-acyl-L-amino acid + a tRNA + H(+). Functionally, hydrolyzes ribosome-free peptidyl-tRNAs (with 1 or more amino acids incorporated), which drop off the ribosome during protein synthesis, or as a result of ribosome stalling. Its function is as follows. Catalyzes the release of premature peptidyl moieties from peptidyl-tRNA molecules trapped in stalled 50S ribosomal subunits, and thus maintains levels of free tRNAs and 50S ribosomes. This chain is Peptidyl-tRNA hydrolase, found in Mycobacterium tuberculosis (strain ATCC 25177 / H37Ra).